A 186-amino-acid polypeptide reads, in one-letter code: uncharacterized protein (186 aa).

This is an uncharacterized protein from Mycoplasma genitalium (strain ATCC 33530 / DSM 19775 / NCTC 10195 / G37) (Mycoplasmoides genitalium).